The sequence spans 432 residues: Amino-acid acetyltransferase (432 aa).

An N-acetyltransferase domain is found at 286 to 425 (ELVREAAIED…ASLYNFQRNS (140 aa)).

This sequence belongs to the acetyltransferase family. ArgA subfamily.

It localises to the cytoplasm. It catalyses the reaction L-glutamate + acetyl-CoA = N-acetyl-L-glutamate + CoA + H(+). Its pathway is amino-acid biosynthesis; L-arginine biosynthesis; N(2)-acetyl-L-ornithine from L-glutamate: step 1/4. The protein is Amino-acid acetyltransferase of Pseudomonas syringae pv. tomato (strain ATCC BAA-871 / DC3000).